Consider the following 280-residue polypeptide: uncharacterized protein (280 aa).

It belongs to the herpesviridae BDLF2 family.

This is an uncharacterized protein from Saimiri sciureus (Common squirrel monkey).